Reading from the N-terminus, the 495-residue chain is Transcription termination/antitermination protein NusA (495 aa).

The S1 motif domain maps to 135 to 200 (GQIITGIVKK…RGAQLFLSRS (66 aa)). Residues 302 to 370 (HHTMDIAVDS…KNLNVSEKVI (69 aa)) enclose the KH domain. Repeat copies occupy residues 364–414 (NVSE…KNGL) and 439–489 (GMNE…RNIC). Residues 364–489 (NVSEKVIKTL…LLIMAARNIC (126 aa)) form a 2 X 51 AA approximate repeats region.

Belongs to the NusA family. Monomer. Binds directly to the core enzyme of the DNA-dependent RNA polymerase and to nascent RNA.

Its subcellular location is the cytoplasm. Functionally, participates in both transcription termination and antitermination. This chain is Transcription termination/antitermination protein NusA, found in Buchnera aphidicola subsp. Schizaphis graminum (strain Sg).